The sequence spans 64 residues: Large ribosomal subunit protein bL35c (64 aa).

The protein belongs to the bacterial ribosomal protein bL35 family.

It localises to the plastid. It is found in the chloroplast. This chain is Large ribosomal subunit protein bL35c, found in Phaeodactylum tricornutum (strain CCAP 1055/1).